The sequence spans 360 residues: GSSSPGVAPADNTGPRAAPSSPSQLCAVCGDTAACQHYGVRTCEGCKGFFKRTVQKGSKYVCLAEKSCPVDKRRRNRCQFCWFQKCLAVGMVKEVVRTDSLKGRRGRLPSKPKCPQESPPSPPISLITALVRAHVDTSPDFANLDYSQYREPSPLEPPMSDLEVIQQFYSLLTTSIDMIKLFAEKVPGYGDLCPEDREQLFASARLELFVLRLAYRTALEDTKLTFSNGSVLDKRQCQRSFGDWLHAVLDFSNTSYSMDIDISTFACLCALTLITDRHGLKEPHRVEQVQMKIIGCLRGHMPGGGGSSSGAAPLQRVLGALPELRSLSVKASQRIFYLKLEDLVPAPPLIENMFRASLPF.

The tract at residues 1–21 is disordered; the sequence is GSSSPGVAPADNTGPRAAPSS. The nuclear receptor DNA-binding region spans 23 to 98; the sequence is SQLCAVCGDT…VGMVKEVVRT (76 aa). NR C4-type zinc fingers lie at residues 26-46 and 62-86; these read CAVC…CEGC and CLAE…FQKC. The NR LBD domain occupies 122-357; sequence PPISLITALV…PLIENMFRAS (236 aa).

Belongs to the nuclear hormone receptor family. NR4 subfamily. As to quaternary structure, forms a heterodimer with USP.

It localises to the nucleus. The sequence is that of Probable nuclear hormone receptor HR38 (HR38) from Bombyx mori (Silk moth).